Here is a 350-residue protein sequence, read N- to C-terminus: uncharacterized protein (350 aa).

A disordered region spans residues 330–350; the sequence is RHPGDLRSEPHYRPSAKLAEF. Residues 331–341 show a composition bias toward basic and acidic residues; the sequence is HPGDLRSEPHY.

This is an uncharacterized protein from Mycobacterium tuberculosis.